We begin with the raw amino-acid sequence, 1004 residues long: E3 ubiquitin-protein ligase NEDD4-like (1004 aa).

A C2 domain is found at 30-154; the sequence is LASHHSRGLE…TEDPTMERPY (125 aa). 2 disordered regions span residues 207 to 230 and 272 to 407; these read SNDS…WEEK and AAHR…TPSV. One can recognise a WW 1 domain in the interval 221 to 254; it reads PPLPPGWEEKVDNLGRTYYVNHNNRSTQWHRPSL. Phosphoserine is present on Ser-341. Thr-347 is modified (phosphothreonine). 2 stretches are compositionally biased toward polar residues: residues 347–359 and 366–376; these read TPDS…SSLI and RLRSCSVTDTV. Ser-371 is subject to Phosphoserine; by WNK1 and WNK4. A Phosphothreonine; by SGK1 modification is found at Thr-396. The 34-residue stretch at 414–447 folds into the WW 2 domain; that stretch reads PGLPSGWEERKDAKGRTYYVNHNNRTTTWTRPIM. The disordered stretch occupies residues 453-523; the sequence is GASGSATNSN…YNSPKPQHKV (71 aa). Residue Ser-475 is modified to Phosphoserine. Residue Ser-477 is modified to Phosphoserine; by SGK1. Ser-478, Ser-493, Ser-504, Ser-508, Ser-512, and Ser-516 each carry phosphoserine. Residues 489–500 show a composition bias toward basic and acidic residues; sequence GAKDSPIRRAVK. WW domains are found at residues 526-559 and 577-610; these read SFLP…DPRL and GPLP…DPRL. The HECT domain maps to 669–1003; the sequence is RPDVLKARLW…VENAQGFEGV (335 aa). Residue Cys-971 is the Glycyl thioester intermediate of the active site.

As to quaternary structure, interacts with UBE2E3. Interacts with NDFIP1; this interaction activates the E3 ubiquitin-protein ligase. Interacts with NDFIP2; this interaction activates the E3 ubiquitin-protein ligase. Interacts (via WW domains) with SCN1A. Interacts (via WW domains) with SCN2A. Interacts (via WW domains) with SCN3A. Interacts (via WW domains) with SCN5A. Interacts (via WW domains) with SCN8A. Interacts (via WW domains) with SCN9A. Interacts (via WW domains) with SCN10A. Interacts (via WW domains) with CLCN5. Interacts with SMAD2. Interacts with SMAD3. Interacts with SMAD6. Interacts with SMAD7. The phosphorylated form interacts with 14-3-3 proteins. Interacts with TNK2. Interacts with WNK1. Interacts with SGK1. Interacts (via C2 domain) with NPC2. Interacts with ARRDC4. Interacts with KCNQ1; promotes internalization of KCNQ1. Interacts (via domains WW1, 3 and 4) with USP36; the interaction inhibits ubiquitination of, at least, NTRK1, KCNQ2 and KCNQ3 by NEDD4L. Interacts with PRRG4 (via cytoplasmic domain). Interacts with LDLRAD3; the interaction is direct. Interacts with UBE2D2. Interacts with TTYH2 and TTYH3. Phosphorylated; which impairs interaction with SCNN. Interaction with YWHAH inhibits dephosphorylation. Aldosterone induces Ser-477 phosphorylation by SGK1. Post-translationally, auto-ubiquitinated. Deubiquitinated by USP36, no effect on NEDD4L protein levels. Both proteins interact and regulate each other's ubiquitination levels. Highly expressed in liver and kidney. Also expressed in heart, brain and lung. Isoform 1 is expressed in kidney, lung and gut. Isoform 3 is ubiquitously expressed.

It localises to the cytoplasm. It is found in the golgi apparatus. The protein localises to the endosome. Its subcellular location is the multivesicular body. It catalyses the reaction S-ubiquitinyl-[E2 ubiquitin-conjugating enzyme]-L-cysteine + [acceptor protein]-L-lysine = [E2 ubiquitin-conjugating enzyme]-L-cysteine + N(6)-ubiquitinyl-[acceptor protein]-L-lysine.. The enzyme catalyses [E2 ubiquitin-conjugating enzyme]-S-ubiquitinyl-L-cysteine + [acceptor protein]-L-cysteine = [E2 ubiquitin-conjugating enzyme]-L-cysteine + [acceptor protein]-S-ubiquitinyl-L-cysteine.. It participates in protein modification; protein ubiquitination. Its activity is regulated as follows. Activated by NDFIP1- and NDFIP2-binding. E3 ubiquitin-protein ligase that mediates the polyubiquitination of lysine and cysteine residues on target proteins and is thereby implicated in the regulation of various signaling pathways including autophagy, innate immunity or DNA repair. Inhibits TGF-beta signaling by triggering SMAD2 and TGFBR1 ubiquitination and proteasome-dependent degradation. Downregulates autophagy and cell growth by ubiquitinating and reducing cellular ULK1 or ASCT2 levels. Promotes ubiquitination and internalization of various plasma membrane channels such as ENaC, SCN2A/Nav1.2, SCN3A/Nav1.3, SCN5A/Nav1.5, SCN9A/Nav1.7, SCN10A/Nav1.8, KCNA3/Kv1.3, KCNH2, EAAT1, KCNQ2/Kv7.2, KCNQ3/Kv7.3 or CLC5. Promotes ubiquitination and degradation of SGK1 and TNK2. Ubiquitinates BRAT1 and this ubiquitination is enhanced in the presence of NDFIP1. Plays a role in dendrite formation by melanocytes. Involved in the regulation of TOR signaling. Ubiquitinates and regulates protein levels of NTRK1 once this one is activated by NGF. Plays a role in antiviral innate immunity by catalyzing 'Lys-29'-linked cysteine ubiquitination of TRAF3, resulting in enhanced 'Lys-48' and 'Lys-63'-linked ubiquitination of TRAF3. Ubiquitinates TTYH2 and TYYH3 and regulates protein levels of TTYH2. The sequence is that of E3 ubiquitin-protein ligase NEDD4-like (Nedd4l) from Mus musculus (Mouse).